A 682-amino-acid chain; its full sequence is Potassium-transporting ATPase ATP-binding subunit (682 aa).

Helical transmembrane passes span 35–55, 62–82, 219–239, and 254–274; these read VMFV…AMAA, TGFT…ANFA, IALT…TVTL, and VLVA…LSAI. The active-site 4-aspartylphosphate intermediate is the Asp-307. ATP-binding positions include Asp-344, Glu-348, 377–384, and Lys-395; that span reads FSAQTRMS. Mg(2+) is bound by residues Asp-518 and Asp-522. 3 helical membrane-spanning segments follow: residues 577–597, 616–636, and 656–676; these read TFSI…AFAA, AILS…PLAL, and IYGV…DMLL.

Belongs to the cation transport ATPase (P-type) (TC 3.A.3) family. Type IA subfamily. As to quaternary structure, the system is composed of three essential subunits: KdpA, KdpB and KdpC.

The protein localises to the cell inner membrane. The enzyme catalyses K(+)(out) + ATP + H2O = K(+)(in) + ADP + phosphate + H(+). Part of the high-affinity ATP-driven potassium transport (or Kdp) system, which catalyzes the hydrolysis of ATP coupled with the electrogenic transport of potassium into the cytoplasm. This subunit is responsible for energy coupling to the transport system and for the release of the potassium ions to the cytoplasm. In Erwinia tasmaniensis (strain DSM 17950 / CFBP 7177 / CIP 109463 / NCPPB 4357 / Et1/99), this protein is Potassium-transporting ATPase ATP-binding subunit.